A 291-amino-acid polypeptide reads, in one-letter code: Small ribosomal subunit biogenesis GTPase RsgA 1 (291 aa).

The region spanning 63-221 is the CP-type G domain; sequence ENALVRPPVA…VADTPGFSSI (159 aa). GTP is bound by residues 112–115 and 164–172; these read SKMD and GQSGVGKST. Zn(2+) contacts are provided by Cys-245, Cys-250, His-252, and Cys-258.

It belongs to the TRAFAC class YlqF/YawG GTPase family. RsgA subfamily. As to quaternary structure, monomer. Associates with 30S ribosomal subunit, binds 16S rRNA. Zn(2+) is required as a cofactor.

The protein localises to the cytoplasm. In terms of biological role, one of several proteins that assist in the late maturation steps of the functional core of the 30S ribosomal subunit. Helps release RbfA from mature subunits. May play a role in the assembly of ribosomal proteins into the subunit. Circularly permuted GTPase that catalyzes slow GTP hydrolysis, GTPase activity is stimulated by the 30S ribosomal subunit. This Listeria monocytogenes serotype 4b (strain F2365) protein is Small ribosomal subunit biogenesis GTPase RsgA 1.